The sequence spans 156 residues: SsrA-binding protein (156 aa).

The interval 134 to 156 (RQTLREQQDKRESLRELRERNRR) is disordered.

It belongs to the SmpB family.

The protein localises to the cytoplasm. Its function is as follows. Required for rescue of stalled ribosomes mediated by trans-translation. Binds to transfer-messenger RNA (tmRNA), required for stable association of tmRNA with ribosomes. tmRNA and SmpB together mimic tRNA shape, replacing the anticodon stem-loop with SmpB. tmRNA is encoded by the ssrA gene; the 2 termini fold to resemble tRNA(Ala) and it encodes a 'tag peptide', a short internal open reading frame. During trans-translation Ala-aminoacylated tmRNA acts like a tRNA, entering the A-site of stalled ribosomes, displacing the stalled mRNA. The ribosome then switches to translate the ORF on the tmRNA; the nascent peptide is terminated with the 'tag peptide' encoded by the tmRNA and targeted for degradation. The ribosome is freed to recommence translation, which seems to be the essential function of trans-translation. The polypeptide is SsrA-binding protein (Paenarthrobacter aurescens (strain TC1)).